A 396-amino-acid chain; its full sequence is Elongation factor Tu (396 aa).

The tr-type G domain maps to lysine 10–valine 205. The segment at glycine 19 to threonine 26 is G1. Glycine 19–threonine 26 contacts GTP. Threonine 26 contacts Mg(2+). The segment at glycine 62 to asparagine 66 is G2. The segment at aspartate 83–glycine 86 is G3. GTP-binding positions include aspartate 83 to histidine 87 and asparagine 138 to aspartate 141. The G4 stretch occupies residues asparagine 138 to aspartate 141. A G5 region spans residues serine 175–leucine 177.

This sequence belongs to the TRAFAC class translation factor GTPase superfamily. Classic translation factor GTPase family. EF-Tu/EF-1A subfamily. As to quaternary structure, monomer.

It is found in the cytoplasm. It catalyses the reaction GTP + H2O = GDP + phosphate + H(+). Its function is as follows. GTP hydrolase that promotes the GTP-dependent binding of aminoacyl-tRNA to the A-site of ribosomes during protein biosynthesis. This is Elongation factor Tu from Mycobacterium avium (strain 104).